Here is a 173-residue protein sequence, read N- to C-terminus: ATP-dependent protease subunit HslV (173 aa).

Threonine 2 is a catalytic residue. The Na(+) site is built by glycine 158, aspartate 161, and serine 164.

This sequence belongs to the peptidase T1B family. HslV subfamily. As to quaternary structure, a double ring-shaped homohexamer of HslV is capped on each side by a ring-shaped HslU homohexamer. The assembly of the HslU/HslV complex is dependent on binding of ATP.

Its subcellular location is the cytoplasm. It catalyses the reaction ATP-dependent cleavage of peptide bonds with broad specificity.. Its activity is regulated as follows. Allosterically activated by HslU binding. In terms of biological role, protease subunit of a proteasome-like degradation complex believed to be a general protein degrading machinery. The protein is ATP-dependent protease subunit HslV of Haemophilus ducreyi (strain 35000HP / ATCC 700724).